Reading from the N-terminus, the 232-residue chain is NAD(P)H-quinone oxidoreductase subunit K 1 (232 aa).

The [4Fe-4S] cluster site is built by Cys49, Cys50, Cys114, and Cys145.

This sequence belongs to the complex I 20 kDa subunit family. As to quaternary structure, NDH-1 can be composed of about 15 different subunits; different subcomplexes with different compositions have been identified which probably have different functions. It depends on [4Fe-4S] cluster as a cofactor.

It is found in the cell inner membrane. The enzyme catalyses a plastoquinone + NADH + (n+1) H(+)(in) = a plastoquinol + NAD(+) + n H(+)(out). It carries out the reaction a plastoquinone + NADPH + (n+1) H(+)(in) = a plastoquinol + NADP(+) + n H(+)(out). NDH-1 shuttles electrons from an unknown electron donor, via FMN and iron-sulfur (Fe-S) centers, to quinones in the respiratory and/or the photosynthetic chain. The immediate electron acceptor for the enzyme in this species is believed to be plastoquinone. Couples the redox reaction to proton translocation, and thus conserves the redox energy in a proton gradient. Cyanobacterial NDH-1 also plays a role in inorganic carbon-concentration. The protein is NAD(P)H-quinone oxidoreductase subunit K 1 of Gloeobacter violaceus (strain ATCC 29082 / PCC 7421).